The primary structure comprises 79 residues: Small ribosomal subunit protein bS18c (79 aa).

This sequence belongs to the bacterial ribosomal protein bS18 family. In terms of assembly, part of the 30S ribosomal subunit.

It is found in the plastid. The protein localises to the chloroplast. This Physcomitrium patens (Spreading-leaved earth moss) protein is Small ribosomal subunit protein bS18c.